The following is a 157-amino-acid chain: MKTTLLVVGRTVEQHYITAINDYIQRTKRFITFDMEVIPELKNTKSLSMDQQKEKEGELILKALQPGDVIVLLDEHGKEMRSLEFADYMKRKMNTVNKRLVFVIGGPYGFSEKVYQVANEKISMSKMTFSHQMIRLIFVEQIYRAMTILNGGPYHHE.

Residues Leu73, Gly105, and 124-129 (MSKMTF) each bind S-adenosyl-L-methionine.

The protein belongs to the RNA methyltransferase RlmH family. Homodimer.

Its subcellular location is the cytoplasm. The catalysed reaction is pseudouridine(1915) in 23S rRNA + S-adenosyl-L-methionine = N(3)-methylpseudouridine(1915) in 23S rRNA + S-adenosyl-L-homocysteine + H(+). Functionally, specifically methylates the pseudouridine at position 1915 (m3Psi1915) in 23S rRNA. The protein is Ribosomal RNA large subunit methyltransferase H of Bacteroides thetaiotaomicron (strain ATCC 29148 / DSM 2079 / JCM 5827 / CCUG 10774 / NCTC 10582 / VPI-5482 / E50).